The sequence spans 359 residues: MNILTPVADRLPSREEAEEALAVLRRWAKHTPVSDVAGLAPDVPALVYPEFSRSYPRNFTVDEAYKASLPDLQNGPASLIVGAKAVIQHVGISNFRLPIRYHTRDNGDLTLETSVTGTVSLEAEKKGINMSRIMRSFYAHAEQGFSFEVIERALEDYKRDLESFDARIQMRFSFPVKVPSLRSGLVGWQYYDIALELVDRGGVRKKIMHLDFVYSSTCPCSLELSEHARRERGQLATPHSQRSVARISVEVRPGKCLWFEDLIELARAAVPTETQVMVKREDEQAFAELNAANPIFVEDAARSFCQALQADPRIGDFRVVASHQESLHSHDAVSVLTEGPTFAAESLDPRLFASLYHTG.

This sequence belongs to the GTP cyclohydrolase IV family.

The enzyme catalyses GTP + H2O = 7,8-dihydroneopterin 3'-triphosphate + formate + H(+). The protein operates within cofactor biosynthesis; 7,8-dihydroneopterin triphosphate biosynthesis; 7,8-dihydroneopterin triphosphate from GTP: step 1/1. Converts GTP to 7,8-dihydroneopterin triphosphate. The protein is GTP cyclohydrolase FolE2 of Cereibacter sphaeroides (strain ATCC 17025 / ATH 2.4.3) (Rhodobacter sphaeroides).